Consider the following 366-residue polypeptide: Histidinol-phosphate aminotransferase 2 (366 aa).

Residues 1 to 21 (MQVKDQLSLLQPYKPGKSPEQ) are disordered. K222 is modified (N6-(pyridoxal phosphate)lysine).

Belongs to the class-II pyridoxal-phosphate-dependent aminotransferase family. Histidinol-phosphate aminotransferase subfamily. In terms of assembly, homodimer. Pyridoxal 5'-phosphate is required as a cofactor.

It carries out the reaction L-histidinol phosphate + 2-oxoglutarate = 3-(imidazol-4-yl)-2-oxopropyl phosphate + L-glutamate. It functions in the pathway amino-acid biosynthesis; L-histidine biosynthesis; L-histidine from 5-phospho-alpha-D-ribose 1-diphosphate: step 7/9. In Bacillus cereus (strain ZK / E33L), this protein is Histidinol-phosphate aminotransferase 2.